We begin with the raw amino-acid sequence, 211 residues long: Thymidylate kinase (211 aa).

Position 7–14 (7–14) interacts with ATP; it reads GIDASGKS.

Belongs to the thymidylate kinase family.

It catalyses the reaction dTMP + ATP = dTDP + ADP. Functionally, phosphorylation of dTMP to form dTDP in both de novo and salvage pathways of dTTP synthesis. This Mesomycoplasma hyopneumoniae (strain 7448) (Mycoplasma hyopneumoniae) protein is Thymidylate kinase.